An 868-amino-acid chain; its full sequence is Cytosolic phospholipase A2 epsilon (868 aa).

The tract at residues 1-46 (MSLQASEGCPGLGTNVFVPQSPQTDEEGSRSGRSFSEFEDTQDLDT) is disordered. The region spanning 46–170 (TPGLPPFCPM…CFRKKTHVKF (125 aa)) is the C2 domain. The Ca(2+) site is built by Asp84, Asp90, Asp140, Asp142, and Asp148. Residues 324–856 (PCPETLDVRL…TLLQALRLAV (533 aa)) form the PLA2c domain. Ser412 functions as the Nucleophile in the catalytic mechanism. Residue Asp700 is the Proton acceptor of the active site. Ser800 is modified (phosphoserine). Residues 857–868 (EKKKRLKGQCPS) are required for localization at membrane structures.

The cofactor is Ca(2+).

The protein localises to the cytoplasm. Its subcellular location is the cytosol. It is found in the early endosome membrane. It localises to the lysosome membrane. The protein resides in the cell membrane. It carries out the reaction a 1,2-diacyl-sn-glycero-3-phosphoethanolamine + a 1,2-diacyl-sn-glycero-3-phosphocholine = an N-acyl-1,2-diacyl-sn-glycero-3-phosphoethanolamine + a 2-acyl-sn-glycero-3-phosphocholine + H(+). The catalysed reaction is 1-hexadecanoyl-2-octadecanoyl-sn-glycero-3-phosphocholine + 1,2-di-(9Z-octadecenoyl)-sn-glycero-3-phosphoethanolamine = 2-octadecanoyl-sn-glycero-3-phosphocholine + N-hexadecanoyl-1,2-di-(9Z-octadecenoyl)-sn-glycero-3-phosphoethanolamine + H(+). The enzyme catalyses 1-octadecanoyl-2-hexadecanoyl-sn-glycero-3-phosphocholine + 1,2-di-(9Z-octadecenoyl)-sn-glycero-3-phosphoethanolamine = N-octadecanoyl-1,2-di-(9Z-octadecenoyl)-sn-glycero-3-phosphoethanolamine + 2-hexadecanoyl-sn-glycero-3-phosphocholine + H(+). It catalyses the reaction 1,2-di-(9Z-octadecenoyl)-sn-glycero-3-phosphoethanolamine + 1,2-dihexadecanoyl-sn-glycero-3-phosphocholine = N-hexadecanoyl-1,2-di-(9Z-octadecenoyl)-sn-glycero-3-phosphoethanolamine + 2-hexadecanoyl-sn-glycero-3-phosphocholine + H(+). It carries out the reaction 1,2-di-(5Z,8Z,11Z,14Z-eicosatetraenoyl)-sn-glycero-3-phosphocholine + 1,2-di-(9Z-octadecenoyl)-sn-glycero-3-phosphoethanolamine = N-(5Z,8Z,11Z,14Z-eicosatetraenoyl)-1,2-di-(9Z-octadecenoyl)-sn-glycero-3-phosphoethanolamine + 2-(5Z,8Z,11Z,14Z)-eicosatetraenoyl-sn-glycero-3-phosphocholine + H(+). The catalysed reaction is 2 1,2-di-(9Z-octadecenoyl)-sn-glycero-3-phosphoethanolamine = N,1,2-tri-(9Z-octadecenoyl)-sn-glycero-3-phosphoethanolamine + 2-(9Z-octadecenoyl)-sn-glycero-3-phosphoethanolamine + H(+). The enzyme catalyses 1-(1Z-octadecenyl)-2-(9Z-octadecenoyl)-sn-glycero-3-phosphoethanolamine + 1,2-dihexadecanoyl-sn-glycero-3-phosphocholine = 1-O-(1Z-octadecenoyl)-2-(9Z-octadecenoyl)-sn-glycero-3-phospho-N-hexadecanoyl-ethanolamine + 2-hexadecanoyl-sn-glycero-3-phosphocholine + H(+). It catalyses the reaction a 1,2-diacyl-sn-glycero-3-phosphocholine + H2O = a 1-acyl-sn-glycero-3-phosphocholine + a fatty acid + H(+). It carries out the reaction 1-hexadecanoyl-2-(5Z,8Z,11Z,14Z-eicosatetraenoyl)-sn-glycero-3-phosphocholine + H2O = 1-hexadecanoyl-sn-glycero-3-phosphocholine + (5Z,8Z,11Z,14Z)-eicosatetraenoate + H(+). The catalysed reaction is 1-hexadecanoyl-sn-glycero-3-phosphocholine + H2O = sn-glycerol 3-phosphocholine + hexadecanoate + H(+). Its activity is regulated as follows. Stimulated by cytosolic Ca(2+). Stimulated by anionic phospholipids such as phosphatidylserines, phosphatidates and phosphatidylinositols. In terms of biological role, calcium-dependent N-acyltransferase involved in the biosynthesis of N-acyl ethanolamines (NAEs) in the brain. Transfers the sn-1 fatty acyl chain of phosphatidylcholine (fatty acyl donor) to the amine group of phosphatidylethanolamine (fatty acyl acceptor) to generate N-acyl phosphatidylethanolamine (NAPE). Similarly can use plasmenylethanolamine as a fatty acyl acceptor to form N-acyl plasmenylethanolamine (N-Acyl-PlsEt). Both NAPE and N-Acyl-PlsEt can serve as precursors of bioactive NAEs like N-arachidonoyl phosphatidylethanolamine also called anandamide. Has weak phospholipase A2 and lysophospholipase activities. Regulates intracellular membrane trafficking that requires modulation of membrane curvature as it occurs by enrichment in lysophospholipids. Promotes tubule formation involved in clathrin-independent endocytotic trafficking and cargo recycling. The sequence is that of Cytosolic phospholipase A2 epsilon from Homo sapiens (Human).